The following is a 164-amino-acid chain: UPF0304 protein NT01EI_2691 (164 aa).

Belongs to the UPF0304 family.

This Edwardsiella ictaluri (strain 93-146) protein is UPF0304 protein NT01EI_2691.